The chain runs to 520 residues: Leucine aminopeptidase 1 (520 aa).

K288 and D293 together coordinate Mn(2+). K300 is a catalytic residue. Mn(2+)-binding residues include D313, D373, and E375. R377 is an active-site residue.

This sequence belongs to the peptidase M17 family. Homohexamer (dimer of homotrimers). Mn(2+) serves as cofactor.

Its subcellular location is the cytoplasm. The catalysed reaction is Release of an N-terminal amino acid, Xaa-|-Yaa-, in which Xaa is preferably Leu, but may be other amino acids including Pro although not Arg or Lys, and Yaa may be Pro. Amino acid amides and methyl esters are also readily hydrolyzed, but rates on arylamides are exceedingly low.. It carries out the reaction Release of N-terminal proline from a peptide.. Presumably involved in the processing and regular turnover of intracellular proteins. Catalyzes the removal of unsubstituted N-terminal amino acids from various peptides. Possesses leucine aminopeptidase activity against the model substrate leucine-amido methyl coumarin. Possesses Cys-Gly dipeptidase activity. In addition, can cleave Cys-Leu and Leu-Cys dipeptides. Its function is as follows. Functions as a molecular chaperone to protect proteins from heat-induced damage. The polypeptide is Leucine aminopeptidase 1 (Arabidopsis thaliana (Mouse-ear cress)).